We begin with the raw amino-acid sequence, 952 residues long: Glycine dehydrogenase (decarboxylating) (952 aa).

Lys-703 carries the post-translational modification N6-(pyridoxal phosphate)lysine.

It belongs to the GcvP family. As to quaternary structure, the glycine cleavage system is composed of four proteins: P, T, L and H. It depends on pyridoxal 5'-phosphate as a cofactor.

The catalysed reaction is N(6)-[(R)-lipoyl]-L-lysyl-[glycine-cleavage complex H protein] + glycine + H(+) = N(6)-[(R)-S(8)-aminomethyldihydrolipoyl]-L-lysyl-[glycine-cleavage complex H protein] + CO2. The glycine cleavage system catalyzes the degradation of glycine. The P protein binds the alpha-amino group of glycine through its pyridoxal phosphate cofactor; CO(2) is released and the remaining methylamine moiety is then transferred to the lipoamide cofactor of the H protein. The sequence is that of Glycine dehydrogenase (decarboxylating) from Mycobacterium leprae (strain Br4923).